A 358-amino-acid polypeptide reads, in one-letter code: MFKMVSSPHTHSGKLTARIMLWVILAMMPAFFTQIYYFGFGVLLQSALAIGTAIIAEFIAIKLRGKKPLNYLSDFSVALTALILAMAIPPYAPYWVIIIGTLCAVLLGKQVYGGLGQNPFNPAMIGYVILLISFPLQMTTWMPPINLLQEPPTFSDAFSLIFSGLTTDGFTLSQLTHNIDGITQATPLDSAKIFYKSHNQLSDFYELIKLPIFMGNGTDFAQGWWQINVAFLAGGIFLILKRIIHWQIPVAMLVTFFCLATATAFTGFTHLSAISQLVSGAMMFGAFFIATDPVTASITPRGKIIFGALVGLFVYLIRYHGNYPDGVAFAILLSNICVPLIDHYTRPRVSGYPTKGRK.

4 consecutive transmembrane segments (helical) span residues 19 to 39 (IMLW…YYFG), 41 to 61 (GVLL…FIAI), 79 to 99 (LTAL…VIII), and 125 to 145 (IGYV…MPPI). Residue Thr186 is modified to FMN phosphoryl threonine. The next 5 helical transmembrane spans lie at 220–240 (FAQG…FLIL), 248–268 (IPVA…FTGF), 271–291 (LSAI…FIAT), 297–317 (SITP…VYLI), and 321–341 (GNYP…VPLI).

Belongs to the NqrB/RnfD family. The complex is composed of six subunits: RnfA, RnfB, RnfC, RnfD, RnfE and RnfG. It depends on FMN as a cofactor.

It is found in the cell inner membrane. Functionally, part of a membrane-bound complex that couples electron transfer with translocation of ions across the membrane. This Haemophilus influenzae (strain PittEE) protein is Ion-translocating oxidoreductase complex subunit D.